A 194-amino-acid chain; its full sequence is Recombination protein RecR (194 aa).

The segment at C53–C68 adopts a C4-type zinc-finger fold. Positions S76–P171 constitute a Toprim domain.

It belongs to the RecR family.

May play a role in DNA repair. It seems to be involved in an RecBC-independent recombinational process of DNA repair. It may act with RecF and RecO. The protein is Recombination protein RecR of Anaplasma phagocytophilum (strain HZ).